The following is a 103-amino-acid chain: Pyrimidine/purine nucleoside phosphorylase (103 aa).

This sequence belongs to the nucleoside phosphorylase PpnP family.

The enzyme catalyses a purine D-ribonucleoside + phosphate = a purine nucleobase + alpha-D-ribose 1-phosphate. The catalysed reaction is adenosine + phosphate = alpha-D-ribose 1-phosphate + adenine. It carries out the reaction cytidine + phosphate = cytosine + alpha-D-ribose 1-phosphate. It catalyses the reaction guanosine + phosphate = alpha-D-ribose 1-phosphate + guanine. The enzyme catalyses inosine + phosphate = alpha-D-ribose 1-phosphate + hypoxanthine. The catalysed reaction is thymidine + phosphate = 2-deoxy-alpha-D-ribose 1-phosphate + thymine. It carries out the reaction uridine + phosphate = alpha-D-ribose 1-phosphate + uracil. It catalyses the reaction xanthosine + phosphate = alpha-D-ribose 1-phosphate + xanthine. Catalyzes the phosphorolysis of diverse nucleosides, yielding D-ribose 1-phosphate and the respective free bases. Can use uridine, adenosine, guanosine, cytidine, thymidine, inosine and xanthosine as substrates. Also catalyzes the reverse reactions. This is Pyrimidine/purine nucleoside phosphorylase from Geobacter sp. (strain M21).